We begin with the raw amino-acid sequence, 171 residues long: Adenine phosphoribosyltransferase (171 aa).

Belongs to the purine/pyrimidine phosphoribosyltransferase family. In terms of assembly, homodimer.

The protein localises to the cytoplasm. It carries out the reaction AMP + diphosphate = 5-phospho-alpha-D-ribose 1-diphosphate + adenine. Its pathway is purine metabolism; AMP biosynthesis via salvage pathway; AMP from adenine: step 1/1. Functionally, catalyzes a salvage reaction resulting in the formation of AMP, that is energically less costly than de novo synthesis. The polypeptide is Adenine phosphoribosyltransferase (Prochlorococcus marinus (strain MIT 9515)).